A 60-amino-acid polypeptide reads, in one-letter code: Large ribosomal subunit protein uL30 (60 aa).

Belongs to the universal ribosomal protein uL30 family. Part of the 50S ribosomal subunit.

The protein is Large ribosomal subunit protein uL30 of Streptococcus gordonii (strain Challis / ATCC 35105 / BCRC 15272 / CH1 / DL1 / V288).